The primary structure comprises 199 residues: MVKSQNITWHDSEVTKNERQEKNGHKSVVLWFTGLSGSGKSTISVALEKALFERGVRSYRLDGDNIRHGLNNNLGFSPEDRKENIRRIGEVSKLLSDAGLITLTAFISPYREDRDHVREILEDGEFVEVYTKASVAACEERDPKQLYKKVRAGEIKNFTGIDAPYEAPEDPEIIVDTEENSVEEAVEQIIQYLEDQKVI.

34–41 (GLSGSGKS) serves as a coordination point for ATP. The Phosphoserine intermediate role is filled by Ser-108.

This sequence belongs to the APS kinase family.

The catalysed reaction is adenosine 5'-phosphosulfate + ATP = 3'-phosphoadenylyl sulfate + ADP + H(+). Its pathway is sulfur metabolism; hydrogen sulfide biosynthesis; sulfite from sulfate: step 2/3. Catalyzes the synthesis of activated sulfate. The sequence is that of Adenylyl-sulfate kinase from Staphylococcus carnosus (strain TM300).